A 264-amino-acid chain; its full sequence is Adenosylcobinamide-GDP ribazoletransferase (264 aa).

A run of 7 helical transmembrane segments spans residues 10–30 (LFFI…VGYT), 43–63 (LVGA…AQVW), 113–133 (LGSY…VALY), 141–161 (VQAL…PVAL), 183–203 (VSDA…AAAW), 205–225 (LGAS…LAAF), and 243–263 (GAAQ…GVWF).

It belongs to the CobS family. Mg(2+) serves as cofactor.

The protein localises to the cell inner membrane. The enzyme catalyses alpha-ribazole + adenosylcob(III)inamide-GDP = adenosylcob(III)alamin + GMP + H(+). The catalysed reaction is alpha-ribazole 5'-phosphate + adenosylcob(III)inamide-GDP = adenosylcob(III)alamin 5'-phosphate + GMP + H(+). It participates in cofactor biosynthesis; adenosylcobalamin biosynthesis; adenosylcobalamin from cob(II)yrinate a,c-diamide: step 7/7. Its function is as follows. Joins adenosylcobinamide-GDP and alpha-ribazole to generate adenosylcobalamin (Ado-cobalamin). Also synthesizes adenosylcobalamin 5'-phosphate from adenosylcobinamide-GDP and alpha-ribazole 5'-phosphate. The protein is Adenosylcobinamide-GDP ribazoletransferase of Leptothrix cholodnii (strain ATCC 51168 / LMG 8142 / SP-6) (Leptothrix discophora (strain SP-6)).